A 97-amino-acid chain; its full sequence is C-C motif chemokine 7 (97 aa).

The signal sequence occupies residues 1-23; sequence MRISATLLCLLLIAAAFSIQVWA. Glutamine 24 bears the Pyrrolidone carboxylic acid mark. An N-linked (GlcNAc...) asparagine glycan is attached at asparagine 29. Intrachain disulfides connect cysteine 33/cysteine 57 and cysteine 34/cysteine 73.

The protein belongs to the intercrine beta (chemokine CC) family. In terms of assembly, monomer. Interacts with TNFAIP6 (via Link domain).

It localises to the secreted. Its function is as follows. Chemotactic factor that attracts monocytes and eosinophils, but not neutrophils. Augments monocyte anti-tumor activity. The polypeptide is C-C motif chemokine 7 (Ccl7) (Mus musculus (Mouse)).